Here is a 256-residue protein sequence, read N- to C-terminus: Dioxygenase lolE1 (256 aa).

The Fe cation site is built by His-125, Asp-127, and His-203.

The protein belongs to the PhyH family. In terms of assembly, homodimer. Fe cation serves as cofactor.

It participates in alkaloid biosynthesis. Its function is as follows. Dioxygenase; part of the gene cluster that mediates the biosynthesis of loline alkaloids, potent insecticidal agents composed of a pyrrolizidine ring system and an uncommon ether bridge linking carbons 2 and 7. Lolines are structurally differentiated by the various modifications of the L-amino group and include norloline, loline, N-methylloline, N-acetylloline, N-acetylnorloline, and N-formylloline. The first committed step is the condensation of O-acetyl-L-homoserine (derived from L-aspartic acid) and L-proline, probably catalyzed by the gamma-type pyridoxal 5'-phosphate(PLP)-dependent enzyme lolC, to give the diamino diacid, NACPP. Ensuing cyclization, decarboxylation, and acetylation steps yield 1-exo-acetamidopyrrolizidine (AcAP). LolO is required for installation of the ether bridge upon the pathway intermediate, 1-exo-acetamidopyrrolizidine (AcAP). In sequential 2-oxoglutarate- and O(2)-consuming steps, lolO removes hydrogens from C2 and C7 of AcAP to form both carbon-oxygen bonds in N-acetylnorloline (NANL), the precursor to all other lolines. The enzymes lolD, lolE, lolF and lolT have also been proposed to be involved in the ether-bridge installation. Further processing of the exocyclic moiety of NANL by fungal N-acetamidase (LolN), methyltransferase (LolM), and cytochrome P450 (LolP) enzymes, with occasional involvement of a plant acetyltransferase, generates the other known lolines. LolN transforms NANL to norlonine which is monomethylated and dimethylated to respectively lonine and N-methyllonine (NML) by lolM. LolP catalyzes hydroxylation of the methyl group in N-methylloline (NML) and further oxygenation to N-formylloline (NFL). A plant acetyltransferase is responsible for the acetylation of loline to form N-acetylloline (NAL). LolA might interact with aspartate kinase to prevent feedback inhibition of its activity by these end products and thereby promote production of L-homoserine from L-aspartate. The polypeptide is Dioxygenase lolE1 (Epichloe uncinata (Endophyte fungus)).